A 729-amino-acid polypeptide reads, in one-letter code: Polyribonucleotide nucleotidyltransferase (729 aa).

Positions 510 and 516 each coordinate Mg(2+). Residues 576–635 (PRVISVKIPVDKIGEVIGPKGKMINQIQADSGAEITVEDDGTIYIGAADGTSAETARSAI) enclose the KH domain. One can recognise an S1 motif domain in the interval 647–719 (GERYLGTIVK…ARGKISLSPS (73 aa)).

Belongs to the polyribonucleotide nucleotidyltransferase family. Mg(2+) serves as cofactor.

It localises to the cytoplasm. The enzyme catalyses RNA(n+1) + phosphate = RNA(n) + a ribonucleoside 5'-diphosphate. Functionally, involved in mRNA degradation. Catalyzes the phosphorolysis of single-stranded polyribonucleotides processively in the 3'- to 5'-direction. The chain is Polyribonucleotide nucleotidyltransferase from Frankia alni (strain DSM 45986 / CECT 9034 / ACN14a).